We begin with the raw amino-acid sequence, 185 residues long: Lysozyme g (185 aa).

Intrachain disulfides connect cysteine 4–cysteine 60 and cysteine 18–cysteine 29. Residue glutamate 73 is part of the active site.

Belongs to the glycosyl hydrolase 23 family.

The protein localises to the secreted. The catalysed reaction is Hydrolysis of (1-&gt;4)-beta-linkages between N-acetylmuramic acid and N-acetyl-D-glucosamine residues in a peptidoglycan and between N-acetyl-D-glucosamine residues in chitodextrins.. In Cygnus atratus (Black swan), this protein is Lysozyme g.